The primary structure comprises 248 residues: MRRKLVAGNWKMNGSLAANALLLAEIKAEFGNPACDVAVCVPAPYLAQCLSLLSDSTIALGAQDVSSHDSGAYTGEVSTAMLLEFACRYVIVGHSERRAYFGETNELVAQKTVRALSAGLMPIVCVGETLEQREAGQTDEVVGRQIDAVLSSIAENDLAKIVVAYEPVWAIGTGKTATPEMAQEVHVMLRRRLHAKNAQAATEVRILYGGSMKPDNAKELLAMPDIDGGLIGGAALKAADFLAIIRAA.

9–11 (NWK) provides a ligand contact to substrate. The active-site Electrophile is H94. The active-site Proton acceptor is E166. Substrate-binding positions include G172, S211, and 232-233 (GG).

The protein belongs to the triosephosphate isomerase family. Homodimer.

The protein localises to the cytoplasm. It carries out the reaction D-glyceraldehyde 3-phosphate = dihydroxyacetone phosphate. Its pathway is carbohydrate biosynthesis; gluconeogenesis. It functions in the pathway carbohydrate degradation; glycolysis; D-glyceraldehyde 3-phosphate from glycerone phosphate: step 1/1. Involved in the gluconeogenesis. Catalyzes stereospecifically the conversion of dihydroxyacetone phosphate (DHAP) to D-glyceraldehyde-3-phosphate (G3P). The protein is Triosephosphate isomerase of Herminiimonas arsenicoxydans.